Consider the following 436-residue polypeptide: Adenylosuccinate synthetase (436 aa).

GTP is bound by residues 12–18 and 40–42; these read GDEGKGK and GHT. D13 functions as the Proton acceptor in the catalytic mechanism. Residues D13 and G40 each contribute to the Mg(2+) site. IMP is bound by residues 13 to 16, 38 to 41, T128, R142, Q223, T238, and R302; these read DEGK and NAGH. H41 functions as the Proton donor in the catalytic mechanism. 298–304 is a substrate binding site; the sequence is TTTGRRR. GTP contacts are provided by residues R304, 330-332, and 412-414; these read KLD and SLG.

Belongs to the adenylosuccinate synthetase family. As to quaternary structure, homodimer. The cofactor is Mg(2+).

It is found in the cytoplasm. The catalysed reaction is IMP + L-aspartate + GTP = N(6)-(1,2-dicarboxyethyl)-AMP + GDP + phosphate + 2 H(+). The protein operates within purine metabolism; AMP biosynthesis via de novo pathway; AMP from IMP: step 1/2. Its function is as follows. Plays an important role in the de novo pathway of purine nucleotide biosynthesis. Catalyzes the first committed step in the biosynthesis of AMP from IMP. The chain is Adenylosuccinate synthetase from Prochlorococcus marinus (strain MIT 9515).